The primary structure comprises 824 residues: Neuronal PAS domain-containing protein 2 (824 aa).

Over residues 1–10 (MDEDEKDRAK) the composition is skewed to basic and acidic residues. A disordered region spans residues 1-21 (MDEDEKDRAKRASRNKSEKKR). The segment at 1–61 (MDEDEKDRAK…VIGFLQKHNE (61 aa)) is sufficient for heterodimer formation with BMAL1, E-box binding and for the effect of NADPH. Residues 9-59 (AKRASRNKSEKKRRDQFNVLIKELSSMLPGNTRKMDKTTVLEKVIGFLQKH) enclose the bHLH domain. The region spanning 82–152 (NEEFTQLMLE…KILSSHMLVT (71 aa)) is the PAS 1 domain. The heme b site is built by histidine 119 and histidine 171. Residues 237-307 (FLKEMCIVDE…RCHQHLMQFG (71 aa)) enclose the PAS 2 domain. The region spanning 311–354 (SCCYRFLTKGQQWIWLQTHYYITYHQWNSKPEFIVCTHSVVSYA) is the PAC domain. 4 disordered regions span residues 367 to 437 (EDPP…MAEA), 556 to 667 (SSTQ…PDFS), 681 to 704 (QPMM…RQVK), and 739 to 824 (PSFP…QPPR). Over residues 378–390 (ALKDKGSSLEPRQ) the composition is skewed to basic and acidic residues. The segment covering 421–431 (TAMSEPTSTPT) has biased composition (polar residues). The segment covering 559–576 (QRPEAQQQLQQRSAAVTQ) has biased composition (low complexity). The segment covering 587 to 610 (GQISSAQVTSQHLLRESSVISTQG) has biased composition (polar residues). The segment covering 614–636 (MRSSQLMQSSGRSGSSLVSPFSS) has biased composition (low complexity). Composition is skewed to polar residues over residues 645-664 (LNLT…QPSP) and 694-704 (SEVSRTGRQVK). Low complexity predominate over residues 739-760 (PSFPASQPSPLQPAQARQQPPQ). A compositionally biased stretch (polar residues) spans 766 to 789 (QAPTSLHSEQQDSLLLSTYSQQPG). Positions 794–805 (PQPPPAQPQPLR) are enriched in pro residues. Residues 809–824 (RVSSLSESSGLQQPPR) show a composition bias toward low complexity.

As to quaternary structure, component of the circadian clock oscillator which includes the CRY proteins, CLOCK or NPAS2, BMAL1 or BMAL2, CSNK1D and/or CSNK1E, TIMELESS and the PER proteins. Efficient DNA binding requires dimerization with another bHLH protein. Forms a heterodimer with BMAL1 and this heterodimerization is required for E-box-dependent transactivation. Interacts with NCOA3, KAT2B, CREBBP and EP300. Heme serves as cofactor.

It localises to the nucleus. With respect to regulation, carbon monoxide (CO) and the redox state of the cell can modulate the transcriptional activity of the NPAS2-BMAL1 heterodimer. NADH and NADPH enhance the DNA-binding activity of the heterodimer whereas CO binds the heme group in NPAS2 and inhibits the DNA-binding activity of the heterodimer. In terms of biological role, transcriptional activator which forms a core component of the circadian clock. The circadian clock, an internal time-keeping system, regulates various physiological processes through the generation of approximately 24 hour circadian rhythms in gene expression, which are translated into rhythms in metabolism and behavior. It is derived from the Latin roots 'circa' (about) and 'diem' (day) and acts as an important regulator of a wide array of physiological functions including metabolism, sleep, body temperature, blood pressure, endocrine, immune, cardiovascular, and renal function. Consists of two major components: the central clock, residing in the suprachiasmatic nucleus (SCN) of the brain, and the peripheral clocks that are present in nearly every tissue and organ system. Both the central and peripheral clocks can be reset by environmental cues, also known as Zeitgebers (German for 'timegivers'). The predominant Zeitgeber for the central clock is light, which is sensed by retina and signals directly to the SCN. The central clock entrains the peripheral clocks through neuronal and hormonal signals, body temperature and feeding-related cues, aligning all clocks with the external light/dark cycle. Circadian rhythms allow an organism to achieve temporal homeostasis with its environment at the molecular level by regulating gene expression to create a peak of protein expression once every 24 hours to control when a particular physiological process is most active with respect to the solar day. Transcription and translation of core clock components (CLOCK, NPAS2, BMAL1, BMAL2, PER1, PER2, PER3, CRY1 and CRY2) plays a critical role in rhythm generation, whereas delays imposed by post-translational modifications (PTMs) are important for determining the period (tau) of the rhythms (tau refers to the period of a rhythm and is the length, in time, of one complete cycle). A diurnal rhythm is synchronized with the day/night cycle, while the ultradian and infradian rhythms have a period shorter and longer than 24 hours, respectively. Disruptions in the circadian rhythms contribute to the pathology of cardiovascular diseases, cancer, metabolic syndromes and aging. A transcription/translation feedback loop (TTFL) forms the core of the molecular circadian clock mechanism. Transcription factors, CLOCK or NPAS2 and BMAL1 or BMAL2, form the positive limb of the feedback loop, act in the form of a heterodimer and activate the transcription of core clock genes and clock-controlled genes (involved in key metabolic processes), harboring E-box elements (5'-CACGTG-3') within their promoters. The core clock genes: PER1/2/3 and CRY1/2 which are transcriptional repressors form the negative limb of the feedback loop and interact with the CLOCK|NPAS2-BMAL1|BMAL2 heterodimer inhibiting its activity and thereby negatively regulating their own expression. This heterodimer also activates nuclear receptors NR1D1/2 and RORA/B/G, which form a second feedback loop and which activate and repress BMAL1 transcription, respectively. The NPAS2-BMAL1 heterodimer positively regulates the expression of MAOA, F7 and LDHA and modulates the circadian rhythm of daytime contrast sensitivity by regulating the rhythmic expression of adenylate cyclase type 1 (ADCY1) in the retina. NPAS2 plays an important role in sleep homeostasis and in maintaining circadian behaviors in normal light/dark and feeding conditions and in the effective synchronization of feeding behavior with scheduled food availability. Regulates the gene transcription of key metabolic pathways in the liver and is involved in DNA damage response by regulating several cell cycle and DNA repair genes. Controls the circadian rhythm of NR0B2 expression by binding rhythmically to its promoter. Mediates the diurnal variation in the expression of GABARA1 receptor in the brain and contributes to the regulation of anxiety-like behaviors and GABAergic neurotransmission in the ventral striatum. The polypeptide is Neuronal PAS domain-containing protein 2 (NPAS2) (Homo sapiens (Human)).